Reading from the N-terminus, the 298-residue chain is MDYFFKSPIDVDLHLDNEEERTFVDYEFEQGRKDKAPIYESDETVKGTVMIRLKDGRKLDHDGVKIEFIGQIENTYDKGNIHEFTRSVQELASPGEMRHAQMFEFEFKHVDKPYESYIGKNVKLRYICRVTVSRKMKDVIREKDLWVYRFENEPETNSLIRMDVGIDECLHIEFEYSKNKYHLKDVIIGKIYFILVRIKVQRMEVSIIRRETIGTSPNQYSNSETITRFQIMDGNPNRGETIPLRMFLNGYALTPTFRDVNKKFSVRYYLSLILVDEDQRRYFKQSEITLWRRRDEHE.

This sequence belongs to the VPS26 family. In terms of assembly, component of the retromer complex which consists of vps29, vps6, vps35, vps5 and vps17. Component of a retromer subcomplex consisting of vps29, vps26 and vps35.

In terms of biological role, plays a role in vesicular protein sorting. Required for the endosome-to-Golgi retrieval of the vacuolar protein sorting receptor pep1/vps10. Component of the membrane-associated retromer complex which is essential in endosome-to-Golgi retrograde transport. The vps29-vps26-vps35 subcomplex may be involved in cargo selection. The sequence is that of Vacuolar protein sorting-associated protein 26 (vps26) from Schizosaccharomyces pombe (strain 972 / ATCC 24843) (Fission yeast).